Consider the following 75-residue polypeptide: Small ribosomal subunit protein eS28 (75 aa).

The protein belongs to the eukaryotic ribosomal protein eS28 family.

The chain is Small ribosomal subunit protein eS28 from Natronomonas pharaonis (strain ATCC 35678 / DSM 2160 / CIP 103997 / JCM 8858 / NBRC 14720 / NCIMB 2260 / Gabara) (Halobacterium pharaonis).